The primary structure comprises 66 residues: Large ribosomal subunit protein bL35 (66 aa).

This sequence belongs to the bacterial ribosomal protein bL35 family.

This Synechococcus sp. (strain RCC307) protein is Large ribosomal subunit protein bL35.